The sequence spans 217 residues: Glycerol-3-phosphate acyltransferase (217 aa).

The next 5 helical transmembrane spans lie at 1 to 21 (MAWAISGLLVILGYLLGSIPT), 54 to 74 (TAAIAVLIIDMLKAMVAVGGV), 84 to 104 (AIVPLDWKPWLIVTVASAAIL), 126 to 146 (VLLVLNPLVALGALASFLFML), and 165 to 185 (LLMLVLHQPLAYILFAILAGI).

It belongs to the PlsY family. Probably interacts with PlsX.

It is found in the cell inner membrane. The catalysed reaction is an acyl phosphate + sn-glycerol 3-phosphate = a 1-acyl-sn-glycero-3-phosphate + phosphate. Its pathway is lipid metabolism; phospholipid metabolism. In terms of biological role, catalyzes the transfer of an acyl group from acyl-phosphate (acyl-PO(4)) to glycerol-3-phosphate (G3P) to form lysophosphatidic acid (LPA). This enzyme utilizes acyl-phosphate as fatty acyl donor, but not acyl-CoA or acyl-ACP. The chain is Glycerol-3-phosphate acyltransferase from Rippkaea orientalis (strain PCC 8801 / RF-1) (Cyanothece sp. (strain PCC 8801)).